Reading from the N-terminus, the 423-residue chain is Adenylosuccinate synthetase (423 aa).

GTP-binding positions include 12 to 18 (GDEGKGK) and 40 to 42 (GHT). The active-site Proton acceptor is the aspartate 13. 2 residues coordinate Mg(2+): aspartate 13 and glycine 40. Residues 13–16 (DEGK), 38–41 (NAGH), threonine 129, arginine 143, glutamine 221, threonine 236, and arginine 300 each bind IMP. Histidine 41 functions as the Proton donor in the catalytic mechanism. Residue 296 to 302 (SVTGRKR) coordinates substrate. Residues arginine 302 and 408-410 (SVG) each bind GTP.

Belongs to the adenylosuccinate synthetase family. In terms of assembly, homodimer. Mg(2+) serves as cofactor.

It localises to the cytoplasm. The enzyme catalyses IMP + L-aspartate + GTP = N(6)-(1,2-dicarboxyethyl)-AMP + GDP + phosphate + 2 H(+). Its pathway is purine metabolism; AMP biosynthesis via de novo pathway; AMP from IMP: step 1/2. In terms of biological role, plays an important role in the de novo pathway of purine nucleotide biosynthesis. Catalyzes the first committed step in the biosynthesis of AMP from IMP. This chain is Adenylosuccinate synthetase, found in Bacteroides thetaiotaomicron (strain ATCC 29148 / DSM 2079 / JCM 5827 / CCUG 10774 / NCTC 10582 / VPI-5482 / E50).